We begin with the raw amino-acid sequence, 472 residues long: UDP-N-acetylmuramate--L-alanine ligase (472 aa).

119–125 (GTHGKTT) contacts ATP.

Belongs to the MurCDEF family.

It is found in the cytoplasm. It carries out the reaction UDP-N-acetyl-alpha-D-muramate + L-alanine + ATP = UDP-N-acetyl-alpha-D-muramoyl-L-alanine + ADP + phosphate + H(+). The protein operates within cell wall biogenesis; peptidoglycan biosynthesis. Its function is as follows. Cell wall formation. The protein is UDP-N-acetylmuramate--L-alanine ligase of Caulobacter sp. (strain K31).